The chain runs to 1670 residues: DNA-directed RNA polymerase I subunit 1 (1670 aa).

Zn(2+)-binding residues include C79, C82, C89, H92, C119, and C122. Residues 154-185 are disordered; the sequence is ESNTPTKSKSSDESCESVVTTDSSEECEDSDV. The span at 176–185 shows a compositional bias: acidic residues; sequence SSEECEDSDV. Positions 213 and 216 each coordinate Zn(2+). A disordered region spans residues 255–293; sequence TSSVENPDGFDDSGIDALSEVEDGDKETREKSTEVAAEF. The segment covering 262–279 has biased composition (acidic residues); that stretch reads DGFDDSGIDALSEVEDGD. Basic and acidic residues predominate over residues 280–293; sequence KETREKSTEVAAEF. Residues D602, D604, and D606 each contribute to the Mg(2+) site. Positions 1005–1017 are bridging helix; it reads PQEYYFHCMAGRE. Residues 1318-1437 are disordered; it reads TGPIAGNETD…EQSKKKRRKF (120 aa). 3 stretches are compositionally biased toward acidic residues: residues 1339-1354, 1366-1379, and 1388-1399; these read DDGDDDGEGTEVDDLG, DEMDYEENSEDETN, and EDPEMDSENEDT. A compositionally biased stretch (basic and acidic residues) spans 1415–1429; the sequence is EPQKEVKGVKNVKEQ.

The protein belongs to the RNA polymerase beta' chain family. As to quaternary structure, component of the RNA polymerase I (Pol I) complex consisting of at least 13 subunits.

Its subcellular location is the nucleus. The catalysed reaction is RNA(n) + a ribonucleoside 5'-triphosphate = RNA(n+1) + diphosphate. In terms of biological role, DNA-dependent RNA polymerase catalyzes the transcription of DNA into RNA using the four ribonucleoside triphosphates as substrates. Largest and catalytic core component of RNA polymerase I which synthesizes ribosomal RNA precursors. Forms the polymerase active center together with the second largest subunit. A single stranded DNA template strand of the promoter is positioned within the central active site cleft of Pol I. A bridging helix emanates from NRPA1 and crosses the cleft near the catalytic site and is thought to promote translocation of Pol I by acting as a ratchet that moves the RNA-DNA hybrid through the active site by switching from straight to bent conformations at each step of nucleotide addition. The protein is DNA-directed RNA polymerase I subunit 1 of Arabidopsis thaliana (Mouse-ear cress).